The following is a 337-amino-acid chain: MYLIYYYTIIAVATASIANEKIFYDIDSASVYYENFIKQHNKEYTTPDQRDAAFVNFKRNLADMNAMNNVSNQAVYGINKFSDIDKITFVNEHAGLVSNLINSTDSNFDPYRLCEYVTVAGPSARTPESFDWRKLNKVTKVKEQGVCGSCWAFAAIGNIESQYAIMHDSLIDLSEQQLLDCDRVDQGCDGGLMHLAFQEIIRIGGVEHEIDYPYQGIEYACRLAPSKLAVRLSHCYQYDLRDERKLLELLYKNGPIAVAIDCVDIIDYRSGIATVCNDNGLNHAVLLVGYGIENDTPYWIFKNSWGSNWGENGYFRARRNINACGMLNEFAASAVLL.

The signal sequence occupies residues 1 to 18 (MYLIYYYTIIAVATASIA). The propeptide at 19 to 126 (NEKIFYDIDS…VTVAGPSART (108 aa)) is activation peptide. Cystine bridges form between Cys-147-Cys-188, Cys-181-Cys-221, and Cys-276-Cys-324. Cys-150 is an active-site residue. Active-site residues include His-283 and Asn-303.

The protein belongs to the peptidase C1 family. In terms of processing, synthesized as an inactive proenzyme and activated by proteolytic removal of the inhibitory propeptide.

It catalyses the reaction Endopeptidase of broad specificity, hydrolyzing substrates of both cathepsin L and cathepsin B.. Cysteine protease that plays an essential role in host liquefaction to facilitate horizontal transmission of the virus. May participate in the degradation of foreign protein expressed by the baculovirus system. This chain is Viral cathepsin (VCATH), found in Spodoptera litura multicapsid nucleopolyhedrovirus (SpltMNPV).